Consider the following 493-residue polypeptide: Cytoplasmic tRNA 2-thiolation protein 2 (493 aa).

The residue at position 489 (serine 489) is a Phosphoserine.

The protein belongs to the CTU2/NCS2 family. In terms of assembly, interacts with NCS6 and URM1. May act by forming a heterodimer with NCS6.

It is found in the cytoplasm. It functions in the pathway tRNA modification; 5-methoxycarbonylmethyl-2-thiouridine-tRNA biosynthesis. Plays a central role in 2-thiolation of mcm(5)S(2)U at tRNA wobble positions of tRNA(Lys), tRNA(Glu) and tRNA(Gln). May act by forming a heterodimer with NCS6 that ligates sulfur from thiocarboxylated URM1 onto the uridine of tRNAs at wobble position. Prior mcm(5) tRNA modification by the elongator complex is required for 2-thiolation. May also be involved in protein urmylation. The sequence is that of Cytoplasmic tRNA 2-thiolation protein 2 from Saccharomyces cerevisiae (strain RM11-1a) (Baker's yeast).